A 140-amino-acid chain; its full sequence is MKIALIAHDKKKADMIEFVTAYQPILEQHELYATGTTGLRIQEATGLKVHRFQSGPYGGDQEIGAMIARNEMDMVIFFRDPLTAQPHEPDVSALIRLCDVYSVPLATNMGTAEILIKGLERGDFAWRNIVRGRKGEINGL.

Positions 1 to 140 (MKIALIAHDK…RGRKGEINGL (140 aa)) constitute an MGS-like domain. Substrate contacts are provided by residues His8, Lys12, 34 to 37 (TGTT), and 54 to 55 (SG). Asp60 serves as the catalytic Proton donor/acceptor. A substrate-binding site is contributed by His87.

The protein belongs to the methylglyoxal synthase family.

It catalyses the reaction dihydroxyacetone phosphate = methylglyoxal + phosphate. In terms of biological role, catalyzes the formation of methylglyoxal from dihydroxyacetone phosphate. The chain is Methylglyoxal synthase from Geobacillus sp. (strain WCH70).